The sequence spans 144 residues: Large-conductance mechanosensitive channel (144 aa).

2 helical membrane-spanning segments follow: residues 14–34 (VLDM…VTSF) and 81–101 (GTFL…FLII).

The protein belongs to the MscL family. As to quaternary structure, homopentamer.

It localises to the cell inner membrane. Its function is as follows. Channel that opens in response to stretch forces in the membrane lipid bilayer. May participate in the regulation of osmotic pressure changes within the cell. The polypeptide is Large-conductance mechanosensitive channel (Bdellovibrio bacteriovorus (strain ATCC 15356 / DSM 50701 / NCIMB 9529 / HD100)).